The sequence spans 81 residues: Large ribosomal subunit protein bL31B (81 aa).

The protein belongs to the bacterial ribosomal protein bL31 family. Type B subfamily. Part of the 50S ribosomal subunit.

The sequence is that of Large ribosomal subunit protein bL31B from Lactococcus lactis subsp. lactis (strain IL1403) (Streptococcus lactis).